We begin with the raw amino-acid sequence, 85 residues long: Double gene block protein 2 (85 aa).

Over 1–2 the chain is Lumenal; it reads MK. The helical transmembrane segment at 3–23 threads the bilayer; the sequence is VLLVTGVLGLLLLIKWKSQST. Topologically, residues 24 to 36 are cytoplasmic; that stretch reads STSNQTCQCPTSP. The chain crosses the membrane as a helical span at residues 37–56; that stretch reads WVIYAFYNSLSLVLLLCHLI. Residues 57–85 lie on the Lumenal side of the membrane; the sequence is PEIKPIHTSYNTHDSSKQQHISINTGNGK.

This sequence belongs to the carmovirus double gene block protein 2 family.

Its subcellular location is the host endoplasmic reticulum membrane. Cell-to-cell movement function. This is Double gene block protein 2 from Turnip crinkle virus (TCV).